A 375-amino-acid polypeptide reads, in one-letter code: MAHSWVEIDLAALRHNYSRAKERLAPGSRILGVVKSDAYGHGMIPVARELVACGASFLAVSKHWEAVDLRAAGIRLPILCLLGVEPSEMAEAIRNEIRPVIYRIDHARRLSDTARSLNATATVHVKLDTGMGRLGIPCRHLEAFLNELLTLPAIRLEGVLSHFASADEADKTSSTLQLTRFREAMALLSARGLSVLGHIANSAGLLDLPQAHFDLARPGIMLYGSPPSLELHKPADLRPVMTFKSKIIQLKDVQAGQPIGYGGTFVTAAPGRIATIPVGYDDGYPRLLSNRGRVLVRGMSAPVVGRVSMNMITADVTHIPSAREDDEVVLLGAQGTERVTAEEIAQLCGTISYEIYCSIGRNRFKSFHNGIANSN.

The active-site Proton acceptor; specific for D-alanine is K35. An N6-(pyridoxal phosphate)lysine modification is found at K35. Residue R133 participates in substrate binding. Y261 functions as the Proton acceptor; specific for L-alanine in the catalytic mechanism. Substrate is bound at residue M309.

This sequence belongs to the alanine racemase family. The cofactor is pyridoxal 5'-phosphate.

It catalyses the reaction L-alanine = D-alanine. Its pathway is amino-acid biosynthesis; D-alanine biosynthesis; D-alanine from L-alanine: step 1/1. Its function is as follows. Catalyzes the interconversion of L-alanine and D-alanine. May also act on other amino acids. This chain is Alanine racemase (alr), found in Syntrophobacter fumaroxidans (strain DSM 10017 / MPOB).